The chain runs to 146 residues: Large ribosomal subunit protein bL19 (146 aa).

Residues 119–146 are disordered; sequence DYRKKGEKGVEKVETTPVSADIETQVAE.

This sequence belongs to the bacterial ribosomal protein bL19 family.

Its function is as follows. This protein is located at the 30S-50S ribosomal subunit interface and may play a role in the structure and function of the aminoacyl-tRNA binding site. The chain is Large ribosomal subunit protein bL19 from Bartonella tribocorum (strain CIP 105476 / IBS 506).